The chain runs to 424 residues: Serine--tRNA ligase (424 aa).

L-serine is bound at residue 231 to 233; sequence TAE. ATP-binding positions include 262–264 and V278; that span reads RRE. L-serine is bound at residue E285. 349–352 contacts ATP; that stretch reads EVSS. An L-serine-binding site is contributed by S384.

Belongs to the class-II aminoacyl-tRNA synthetase family. Type-1 seryl-tRNA synthetase subfamily. Homodimer. The tRNA molecule binds across the dimer.

It is found in the cytoplasm. The catalysed reaction is tRNA(Ser) + L-serine + ATP = L-seryl-tRNA(Ser) + AMP + diphosphate + H(+). It catalyses the reaction tRNA(Sec) + L-serine + ATP = L-seryl-tRNA(Sec) + AMP + diphosphate + H(+). It participates in aminoacyl-tRNA biosynthesis; selenocysteinyl-tRNA(Sec) biosynthesis; L-seryl-tRNA(Sec) from L-serine and tRNA(Sec): step 1/1. Catalyzes the attachment of serine to tRNA(Ser). Is also able to aminoacylate tRNA(Sec) with serine, to form the misacylated tRNA L-seryl-tRNA(Sec), which will be further converted into selenocysteinyl-tRNA(Sec). The polypeptide is Serine--tRNA ligase (Chlamydia abortus (strain DSM 27085 / S26/3) (Chlamydophila abortus)).